Here is a 745-residue protein sequence, read N- to C-terminus: Cysteine protease atg4 (745 aa).

3 stretches are compositionally biased toward low complexity: residues 29–42 (QQSYLRQQQQAPQQ), 52–64 (SPTSSSSTPSSST), and 194–215 (NNNSNSNNNNNHNNNHNNNNNN). Disordered regions lie at residues 29–68 (QQSYLRQQQQAPQQISYGFNQPNSPTSSSSTPSSSTAMGN) and 192–215 (FQNNNSNSNNNNNHNNNHNNNNNN). Cysteine 262 functions as the Nucleophile in the catalytic mechanism. Disordered stretches follow at residues 344-363 (LNRGGGGSSKGKKKKEKEEE) and 439-480 (QNNN…NGYN). Residues 439 to 477 (QNNNKNNNNNNPTTTTTTTTTATSSNNNNNQSPPSRVPN) show a composition bias toward low complexity. Catalysis depends on residues aspartate 562 and histidine 564. A disordered region spans residues 686 to 745 (HIPYNPNNNQNNNQNNNNNNNKNNNNNTNQQQTPNYPPKLNTYQPDFSSDGEIDDFTMVG). Low complexity predominate over residues 688 to 719 (PYNPNNNQNNNQNNNNNNNKNNNNNTNQQQTP). The span at 734–745 (SDGEIDDFTMVG) shows a compositional bias: acidic residues.

It belongs to the peptidase C54 family.

The protein resides in the cytoplasm. It carries out the reaction [protein]-C-terminal L-amino acid-glycyl-phosphatidylethanolamide + H2O = [protein]-C-terminal L-amino acid-glycine + a 1,2-diacyl-sn-glycero-3-phosphoethanolamine. Its function is as follows. Cysteine protease that plays a key role in autophagy by mediating both proteolytic activation and delipidation of ATG8 family proteins. The protease activity is required for proteolytic activation of ATG8 family proteins: cleaves the C-terminal amino acid of ATG8 proteins to reveal a C-terminal glycine. Exposure of the glycine at the C-terminus is essential for ATG8 proteins conjugation to phosphatidylethanolamine (PE) and insertion to membranes, which is necessary for autophagy. In addition to the protease activity, also mediates delipidation of PE-conjugated ATG8 proteins. The protein is Cysteine protease atg4 (atg4-1) of Dictyostelium discoideum (Social amoeba).